A 230-amino-acid chain; its full sequence is MKIEPITGSEAEAFHRMGSRAFERYNEFVDLLVGAGIADGQTVVDLCCGSGELEIILTSRFPSLNLVGVDLSEDMVRIARDYAAEQGKELEFRHGDAQSPAGMEDLLGKADLVVSRHAFHRLTRLPAGFDTMLRLVKPGGAILNVSFLHLSDFDEPGFRTWVRFLKERPWDAEMQVAWALAHYYAPRLQDYRDALAQAADETPVSEQRIWVDDQGYGVATVKCFARRAAA.

Belongs to the methyltransferase superfamily.

Its pathway is antibiotic biosynthesis. Functionally, mediates C-methylation at the 8-position of the aminocoumarin moieties in coumermycin A1 in the biosynthetic pathway of coumermycin antibiotic. Active on both mono- and bis-amides for mono- and di-C-methylation adjacent to the phenolic hydroxyl before it is glycosylated by CouM. This Streptomyces rishiriensis protein is C-methyltransferase CouO (couO).